Reading from the N-terminus, the 292-residue chain is 31 kDa ribonucleoprotein, chloroplastic (292 aa).

Residues 88–166 (LKLFVGNLPF…RAIRVNAGPA (79 aa)) enclose the RRM 1 domain. Residues 165–203 (PAPAKRENSSFGGGRGGNSSYGGGRDGNSSFGGARGGRS) form a disordered region. The linker (Gly-rich) stretch occupies residues 167–207 (PAKRENSSFGGGRGGNSSYGGGRDGNSSFGGARGGRSVDSS). Over residues 175 to 190 (FGGGRGGNSSYGGGRD) the composition is skewed to gly residues. The RRM 2 domain occupies 208 to 286 (NRVYVGNLSW…RSIRVSAAEE (79 aa)).

Expressed at high levels in the leaves and seedlings, and lower levels are seen in the stems and roots.

Its subcellular location is the plastid. It is found in the chloroplast. The sequence is that of 31 kDa ribonucleoprotein, chloroplastic from Nicotiana plumbaginifolia (Leadwort-leaved tobacco).